The chain runs to 509 residues: Protein Jade-1 (509 aa).

A disordered region spans residues 1–45 (MKRGRLPSSSEDSDDNGSLSTTWSQNSRSQHRRSSCSRPEDRKPS). The tract at residues 60-80 (DSYQLNPDEYYVLADPWRQEW) is interaction with KAT7/HBO1 and histones. The tract at residues 80–188 (WEKGVQVPVS…EQRCYDNMNH (109 aa)) is interaction with histones. S89 is subject to Phosphoserine. At T92 the chain carries Phosphothreonine. Residue K114 forms a Glycyl lysine isopeptide (Lys-Gly) (interchain with G-Cter in SUMO2) linkage. The PHD-type 1 zinc finger occupies 203-253 (YVVCDVCQSPDGEDGNEMVFCDKCNICVHQACYGILKVPEGSWLCRTCALG). Residues 255-289 (QPKCLLCPKKGGAMKPTRSGTKWVHVSCALWIPEV) form a C2HC pre-PHD-type zinc finger. The PHD-type 2 zinc finger occupies 313–369 (LVCSLCNEKFGASIQCSVKNCRTAFHVTCAFDRGLEMKTILAENDEVKFKSYCPKHS). The interval 373–399 (KAEEGLGEGTAQENGAPECSPRDPLEP) is disordered.

This sequence belongs to the JADE family. Component of the HBO1 complex composed at least of ING4 or ING5, KAT7/HBO1, MEAF6, and one of JADE1, JADE2 and JADE3. Interacts with NPHP4.

It is found in the nucleus. The protein resides in the chromosome. It localises to the cytoplasm. Its subcellular location is the cytoskeleton. The protein localises to the cilium basal body. Its function is as follows. Scaffold subunit of some HBO1 complexes, which have a histone H4 acetyltransferase activity. Plays a key role in HBO1 complex by directing KAT7/HBO1 specificity towards histone H4 acetylation (H4K5ac, H4K8ac and H4K12ac), regulating DNA replication initiation, regulating DNA replication initiation. May also promote acetylation of nucleosomal histone H4 by KAT5. Promotes apoptosis. May act as a renal tumor suppressor. Negatively regulates canonical Wnt signaling; at least in part, cooperates with NPHP4 in this function. In Bos taurus (Bovine), this protein is Protein Jade-1 (JADE1).